Reading from the N-terminus, the 131-residue chain is MAKRKQNVRSKRKVKKHVEVGVVHIRSTFNNTIITITDTQGNAISWATSGNLGFKGSRKSTPFAAQMAAETAAKVAMDNGMRTVEVNVKGPGAGREAAIRALQATGLEVTAIRDVTPVPHNGCRPPKRRRV.

It belongs to the universal ribosomal protein uS11 family. In terms of assembly, part of the 30S ribosomal subunit. Interacts with proteins S7 and S18. Binds to IF-3.

In terms of biological role, located on the platform of the 30S subunit, it bridges several disparate RNA helices of the 16S rRNA. Forms part of the Shine-Dalgarno cleft in the 70S ribosome. The sequence is that of Small ribosomal subunit protein uS11 from Exiguobacterium sp. (strain ATCC BAA-1283 / AT1b).